The primary structure comprises 897 residues: Transportin-2 (897 aa).

20 HEAT repeats span residues 9 to 36 (GLQQVLQLLKDSQSPNTATQRIVQDKLK), 41 to 79 (FPDFNNYLIFVLTRLKSEDEPTRSLSGLILKNNVKAHYQ), 88 to 121 (FIKQECLNNIGDASSLIRATIGILITTIASKGEL), 127 to 164 (LLPQLCNLLNSEDYNTCEGAFGALQKICEDSSELLDSD), 171 to 201 (NIMIPKFLQFFKHCSPKIRSHAIACVNQFIM), 214 to 241 (FIEHLFALAVDDDPEVRKNVCRALVMLL), 253 to 280 (HSIIQYMLQRTQDHDENVALEACEFWLT), 296 to 386 (VQLI…LANV), 394 to 422 (HLLPLLKGLLFHPEWVVKESGILVLGAIA), 434 to 461 (PELIPHLIQCLSDKKALVRSIACWTLSR), 475 to 508 (LKPLMTELLKRILDGNKRVQEAACSAFATLEEEA), 516 to 549 (LSYILDTLVFAFGKYQHKNLLILYDAIGTLADSV), 557 to 595 (EYIQKLMPPLIQKWNELKDEDKDLFPLLECLSSVATALQ), 603 to 654 (EPVY…GLGG), 665 to 696 (IMTLLFQCMQDSMPEVRQSSFALLGDLTKACF), 704 to 737 (AEFMPILGTNLNPEFISVCNNATWAIGEICMQMG), 745 to 790 (QMVL…YVCP), 798 to 831 (QQFIRPWCTSLRNIRDNEEKDSAFRGICMMIGVN), 840 to 871 (IFFCDAVASWVSPKDDLRDMFYKILHGFKDQV), and 874 to 894 (DNWQQFSEQFPPLLKERLAAF). The Importin N-terminal domain maps to 31–99 (VQDKLKQLNQ…KQECLNNIGD (69 aa)). A disordered region spans residues 325 to 364 (AVPDSEQDIKPRFHKSRTVTLPHEAERPDGSEDAEDDDDD). Over residues 355–364 (SEDAEDDDDD) the composition is skewed to acidic residues. N6-acetyllysine is present on Lys862.

Belongs to the importin beta family. Importin beta-2 subfamily.

It is found in the cytoplasm. Its subcellular location is the nucleus. In terms of biological role, probably functions in nuclear protein import as nuclear transport receptor. Serves as receptor for nuclear localization signals (NLS) in cargo substrates. Is thought to mediate docking of the importin/substrate complex to the nuclear pore complex (NPC) through binding to nucleoporin and the complex is subsequently translocated through the pore by an energy requiring, Ran-dependent mechanism. At the nucleoplasmic side of the NPC, Ran binds to the importin, the importin/substrate complex dissociates and importin is re-exported from the nucleus to the cytoplasm where GTP hydrolysis releases Ran. The directionality of nuclear import is thought to be conferred by an asymmetric distribution of the GTP- and GDP-bound forms of Ran between the cytoplasm and nucleus. This Homo sapiens (Human) protein is Transportin-2 (TNPO2).